The sequence spans 541 residues: GTPase Obg (541 aa).

One can recognise an Obg domain in the interval 2 to 159; that stretch reads PTFVDRVVLH…LDAVLELKSV (158 aa). Positions 63-84 are disordered; the sequence is HPHQRAGGGRPGQGSNRHGADG. The region spanning 160 to 332 is the OBG-type G domain; that stretch reads ADVALVGFPS…LALALAELVA (173 aa). Residues 166–173, 191–195, 213–216, 284–287, and 313–315 each bind GTP; these read GFPSAGKS, FTTLV, DVPG, NKVD, and STA. Ser-173 and Thr-193 together coordinate Mg(2+). Residues 350-427 enclose the OCT domain; that stretch reads PRAVDEPDFT…IGAVTFDWEP (78 aa). The segment at 497–541 is disordered; that stretch reads KRLTRAQRTALSDSADDFDDGAGFSDSAAFGDSGGSGGDADGGRG. Residues 517-527 are compositionally biased toward low complexity; that stretch reads GAGFSDSAAFG. Over residues 528 to 541 the composition is skewed to gly residues; sequence DSGGSGGDADGGRG.

It belongs to the TRAFAC class OBG-HflX-like GTPase superfamily. OBG GTPase family. In terms of assembly, monomer. Mg(2+) is required as a cofactor.

The protein resides in the cytoplasm. Its function is as follows. An essential GTPase which binds GTP, GDP and possibly (p)ppGpp with moderate affinity, with high nucleotide exchange rates and a fairly low GTP hydrolysis rate. Plays a role in control of the cell cycle, stress response, ribosome biogenesis and in those bacteria that undergo differentiation, in morphogenesis control. This Parafrankia sp. (strain EAN1pec) protein is GTPase Obg.